The sequence spans 186 residues: Lipid A palmitoyltransferase PagP (186 aa).

The N-terminal stretch at 1–25 is a signal peptide; sequence MNVSKYVAIFSFVFIQLISVGKVFA. Residues His-58, Asp-101, and Ser-102 contribute to the active site.

Belongs to the lipid A palmitoyltransferase family. Homodimer.

It localises to the cell outer membrane. It carries out the reaction lipid A (E. coli) + a 1-hexadecanoyl-2-acyl-sn-glycero-3-phosphocholine = hepta-acyl lipid A (E. coli) + a 2-acyl-sn-glycero-3-phosphocholine. The enzyme catalyses lipid IIA + a 1-hexadecanoyl-2-acyl-sn-glycero-3-phosphocholine = lipid IIB + a 2-acyl-sn-glycero-3-phosphocholine. The catalysed reaction is lipid IVA (E. coli) + a 1-hexadecanoyl-2-acyl-sn-glycero-3-phosphocholine = lipid IVB (E. coli) + a 2-acyl-sn-glycero-3-phosphocholine. In terms of biological role, transfers a palmitate residue from the sn-1 position of a phospholipid to the N-linked hydroxymyristate on the proximal unit of lipid A or its precursors. This Escherichia coli O157:H7 protein is Lipid A palmitoyltransferase PagP.